The primary structure comprises 456 residues: Peripherin (456 aa).

Polar residues predominate over residues 1–14 (MSHSGLRSTSTSYR). The interval 1 to 55 (MSHSGLRSTSTSYRRTLGSSPVPSSYSSSSRLSTSRHFGSPSPGPSSRSSSSAFR) is disordered. Positions 1 to 90 (MSHSGLRSTS…FLTTRSNEKA (90 aa)) are head. Low complexity predominate over residues 16-55 (TLGSSPVPSSYSSSSRLSTSRHFGSPSPGPSSRSSSSAFR). An IF rod domain is found at 88-397 (EKAELQELND…KLLEGEESRI (310 aa)). The tract at residues 91 to 123 (ELQELNDRFASFIEKVRYLEQQNAVLVTEINQA) is coil 1A. The segment at 124-134 (RSKEPTRASDL) is linker 1. The coil 1B stretch occupies residues 135–230 (CQQELRELRK…KLHEEELNDV (96 aa)). The tract at residues 231–252 (QVSVQAQPVHMEIEAAKQPDLT) is linker 2. The tract at residues 253-395 (SALRDIRSQY…YRKLLEGEES (143 aa)) is coil 2. A tail region spans residues 396–456 (RIAVPIHSLT…RKEQSSEGEK (61 aa)). The disordered stretch occupies residues 411–456 (SPAAPEIDPSTETHTRKTVAIKTIETRDGEQVVTESRKEQSSEGEK). Residues 434–456 (IETRDGEQVVTESRKEQSSEGEK) show a composition bias toward basic and acidic residues.

It belongs to the intermediate filament family. Forms homodimers (in vitro). Homopolymerizes into a filamentous network (in vitro).

Its subcellular location is the cytoplasm. It localises to the cytoskeleton. The protein resides in the cell projection. It is found in the axon. The protein localises to the perikaryon. Class-III neuronal intermediate filament protein. My form an independent structural network without the involvement of other neurofilaments or may cooperate with other neuronal intermediate filament proteins to form a filamentous network. The protein is Peripherin (prph) of Xenopus laevis (African clawed frog).